Consider the following 809-residue polypeptide: DNA replication helicase (809 aa).

ATP is bound at residue 72–79; it reads GTAGAGKS.

Belongs to the herpesviridae helicase family. In terms of assembly, associates with the primase and the primase-associated factor to form the helicase-primase complex.

It is found in the host nucleus. Functionally, component of the helicase/primase complex. Unwinds the DNA at the replication forks and generates single-stranded DNA for both leading and lagging strand synthesis. The primase synthesizes short RNA primers on the lagging strand that the polymerase elongates using dNTPs. Possesses helicase-like motifs and therefore may act as the helicase subunit of the complex. This is DNA replication helicase from Epstein-Barr virus (strain B95-8) (HHV-4).